Here is a 252-residue protein sequence, read N- to C-terminus: 2-succinyl-6-hydroxy-2,4-cyclohexadiene-1-carboxylate synthase (252 aa).

The protein belongs to the AB hydrolase superfamily. MenH family. Monomer.

It carries out the reaction 5-enolpyruvoyl-6-hydroxy-2-succinyl-cyclohex-3-ene-1-carboxylate = (1R,6R)-6-hydroxy-2-succinyl-cyclohexa-2,4-diene-1-carboxylate + pyruvate. It functions in the pathway quinol/quinone metabolism; 1,4-dihydroxy-2-naphthoate biosynthesis; 1,4-dihydroxy-2-naphthoate from chorismate: step 3/7. The protein operates within quinol/quinone metabolism; menaquinone biosynthesis. Its function is as follows. Catalyzes a proton abstraction reaction that results in 2,5-elimination of pyruvate from 2-succinyl-5-enolpyruvyl-6-hydroxy-3-cyclohexene-1-carboxylate (SEPHCHC) and the formation of 2-succinyl-6-hydroxy-2,4-cyclohexadiene-1-carboxylate (SHCHC). This chain is 2-succinyl-6-hydroxy-2,4-cyclohexadiene-1-carboxylate synthase, found in Citrobacter koseri (strain ATCC BAA-895 / CDC 4225-83 / SGSC4696).